The following is a 333-amino-acid chain: Fructose-1,6-bisphosphatase class 1 1 (333 aa).

Mg(2+) is bound by residues Glu81, Asp100, Leu102, and Asp103. Substrate contacts are provided by residues 103 to 106 and Asn191; that span reads DGSS. Mg(2+) is bound at residue Glu263.

The protein belongs to the FBPase class 1 family. In terms of assembly, homotetramer. It depends on Mg(2+) as a cofactor.

Its subcellular location is the cytoplasm. It carries out the reaction beta-D-fructose 1,6-bisphosphate + H2O = beta-D-fructose 6-phosphate + phosphate. It functions in the pathway carbohydrate biosynthesis; Calvin cycle. This chain is Fructose-1,6-bisphosphatase class 1 1, found in Cereibacter sphaeroides (strain ATCC 17029 / ATH 2.4.9) (Rhodobacter sphaeroides).